Reading from the N-terminus, the 181-residue chain is Akirin-2 (181 aa).

The tract at residues 18 to 48 (SPAASPKRRRCAPLSPSGPSPQKYLRLEPSP) is disordered. A Nuclear localization signal motif is present at residues 23-28 (PKRRRC). The SYVS motif motif lies at 178–181 (SYVS).

This sequence belongs to the akirin family. As to quaternary structure, homodimer. Interacts with actl6a/baf53a. Interacts with gmnn.

The protein resides in the nucleus. Functionally, molecular adapter that acts as a bridge between a variety of multiprotein complexes, and which is involved in embryonic development, immunity, myogenesis and brain development. Plays a key role in nuclear protein degradation by promoting import of proteasomes into the nucleus: acts by bridging fully assembled 20S proteasomes with nuclear import receptor ipo9. Involved in both neural precursor maintenance and terminal neural differentiation: bridges gmnn and actl6a/baf53a in neural progenitor cells, antagonizing the activity of gmnn, thereby suppressing sox2 expression. Also required for proper activation of neurod1 and neuronal differentiation. Involved in myogenesis: required for skeletal muscle formation and skeletal development, possibly by regulating expression of muscle differentiation factors. This Xenopus laevis (African clawed frog) protein is Akirin-2.